A 166-amino-acid chain; its full sequence is Thioredoxin, mitochondrial (166 aa).

The N-terminal 59 residues, 1 to 59, are a transit peptide targeting the mitochondrion; it reads MAQRLLLGRFLTSVISRKPPQGVWASLTSKTLQTPQYNAGGLTVMPSPARTVHTTRVCL. One can recognise a Thioredoxin domain in the interval 61 to 166; the sequence is TFNVQDGPDF…LEAFLKKLIG (106 aa). Active-site nucleophile residues include C90 and C93. C90 and C93 form a disulfide bridge. K152 bears the N6-acetyllysine; alternate mark. At K152 the chain carries N6-succinyllysine; alternate.

The protein belongs to the thioredoxin family. As to quaternary structure, monomer.

Its subcellular location is the mitochondrion. Functionally, important for the control of mitochondrial reactive oxygen species homeostasis, apoptosis regulation and cell viability. Is involved in various redox reactions including the reduction of protein disulfide bonds, through the reversible oxidation of its active center dithiol to a disulfide. In Mus musculus (Mouse), this protein is Thioredoxin, mitochondrial (Txn2).